A 261-amino-acid polypeptide reads, in one-letter code: MTHQTHAYHMVNPSPWPLTGALSALLMTSGLAMWFHYNSMLLLTLGLMTNLLTMYQWWRDIVRESTFQGHHTLVVQKGLRYGMILFIISEVFFFSGFFWAFYHSSLAPTPELGGCWPPTGIHPLNPMEVPLLNTSVLLASGVSITWAHHSLMEGNRKHMLQALFITISLGVYFTLLQASEYYEAPFTISDGIYGSTFFVATGFHGLHVIIGSTFLIVCFLRQLKFHFTSNHHFGFEAAAWYWHFVDVVWLFLYVSIYWWGS.

Residues 1–15 (MTHQTHAYHMVNPSP) are Mitochondrial matrix-facing. The chain crosses the membrane as a helical span at residues 16–34 (WPLTGALSALLMTSGLAMW). Topologically, residues 35–40 (FHYNSM) are mitochondrial intermembrane. A helical transmembrane segment spans residues 41–66 (LLLTLGLMTNLLTMYQWWRDIVREST). Residues 67–72 (FQGHHT) lie on the Mitochondrial matrix side of the membrane. Residues 73-105 (LVVQKGLRYGMILFIISEVFFFSGFFWAFYHSS) form a helical membrane-spanning segment. Residues 106-128 (LAPTPELGGCWPPTGIHPLNPME) lie on the Mitochondrial intermembrane side of the membrane. Residues 129–152 (VPLLNTSVLLASGVSITWAHHSLM) form a helical membrane-spanning segment. The Mitochondrial matrix segment spans residues 153 to 155 (EGN). Residues 156-183 (RKHMLQALFITISLGVYFTLLQASEYYE) form a helical membrane-spanning segment. The Mitochondrial intermembrane segment spans residues 184–190 (APFTISD). A helical membrane pass occupies residues 191–223 (GIYGSTFFVATGFHGLHVIIGSTFLIVCFLRQL). At 224–232 (KFHFTSNHH) the chain is on the mitochondrial matrix side. A helical membrane pass occupies residues 233-256 (FGFEAAAWYWHFVDVVWLFLYVSI). The Mitochondrial intermembrane segment spans residues 257 to 261 (YWWGS).

This sequence belongs to the cytochrome c oxidase subunit 3 family. Component of the cytochrome c oxidase (complex IV, CIV), a multisubunit enzyme composed of 14 subunits. The complex is composed of a catalytic core of 3 subunits MT-CO1, MT-CO2 and MT-CO3, encoded in the mitochondrial DNA, and 11 supernumerary subunits COX4I, COX5A, COX5B, COX6A, COX6B, COX6C, COX7A, COX7B, COX7C, COX8 and NDUFA4, which are encoded in the nuclear genome. The complex exists as a monomer or a dimer and forms supercomplexes (SCs) in the inner mitochondrial membrane with NADH-ubiquinone oxidoreductase (complex I, CI) and ubiquinol-cytochrome c oxidoreductase (cytochrome b-c1 complex, complex III, CIII), resulting in different assemblies (supercomplex SCI(1)III(2)IV(1) and megacomplex MCI(2)III(2)IV(2)).

The protein resides in the mitochondrion inner membrane. The catalysed reaction is 4 Fe(II)-[cytochrome c] + O2 + 8 H(+)(in) = 4 Fe(III)-[cytochrome c] + 2 H2O + 4 H(+)(out). Component of the cytochrome c oxidase, the last enzyme in the mitochondrial electron transport chain which drives oxidative phosphorylation. The respiratory chain contains 3 multisubunit complexes succinate dehydrogenase (complex II, CII), ubiquinol-cytochrome c oxidoreductase (cytochrome b-c1 complex, complex III, CIII) and cytochrome c oxidase (complex IV, CIV), that cooperate to transfer electrons derived from NADH and succinate to molecular oxygen, creating an electrochemical gradient over the inner membrane that drives transmembrane transport and the ATP synthase. Cytochrome c oxidase is the component of the respiratory chain that catalyzes the reduction of oxygen to water. Electrons originating from reduced cytochrome c in the intermembrane space (IMS) are transferred via the dinuclear copper A center (CU(A)) of subunit 2 and heme A of subunit 1 to the active site in subunit 1, a binuclear center (BNC) formed by heme A3 and copper B (CU(B)). The BNC reduces molecular oxygen to 2 water molecules using 4 electrons from cytochrome c in the IMS and 4 protons from the mitochondrial matrix. The polypeptide is Cytochrome c oxidase subunit 3 (MT-CO3) (Ceratotherium simum (White rhinoceros)).